A 280-amino-acid polypeptide reads, in one-letter code: Small ribosomal subunit protein uS3 (280 aa).

A KH type-2 domain is found at 38-106 (IRRLLSTGLE…QVQLNILEVR (69 aa)). Positions 215 to 280 (AAAAPAGAER…PAAEPQSTES (66 aa)) are disordered. The span at 238–280 (SGASGTTATGTEAGRAAASADESTAAGQPAEAAPAAEPQSTES) shows a compositional bias: low complexity.

This sequence belongs to the universal ribosomal protein uS3 family. As to quaternary structure, part of the 30S ribosomal subunit. Forms a tight complex with proteins S10 and S14.

Its function is as follows. Binds the lower part of the 30S subunit head. Binds mRNA in the 70S ribosome, positioning it for translation. The polypeptide is Small ribosomal subunit protein uS3 (Mycolicibacterium paratuberculosis (strain ATCC BAA-968 / K-10) (Mycobacterium paratuberculosis)).